The chain runs to 420 residues: F-box protein At5g07610 (420 aa).

Residues 1-25 (MSSCSRTRTKAPRSARSRRNGGFSS) form a disordered region. A compositionally biased stretch (basic residues) spans 7–19 (TRTKAPRSARSRR). The F-box domain maps to 27-77 (SATIVADIDDVLIQILSFLPIKTLLRFKRVSKRWLSLITNPVFSNRVIKSN).

The sequence is that of F-box protein At5g07610 from Arabidopsis thaliana (Mouse-ear cress).